A 326-amino-acid chain; its full sequence is Putative ribose-phosphate pyrophosphokinase 2 (326 aa).

ATP-binding positions include 43–45 and 102–103; these read DGE and RQ. A Mg(2+)-binding site is contributed by H136. Residues D225 and 229-233 each bind D-ribose 5-phosphate; that span reads NTGKT.

The protein belongs to the ribose-phosphate pyrophosphokinase family. Class I subfamily. In terms of assembly, homohexamer. Mg(2+) is required as a cofactor.

The protein localises to the cytoplasm. It catalyses the reaction D-ribose 5-phosphate + ATP = 5-phospho-alpha-D-ribose 1-diphosphate + AMP + H(+). Its pathway is metabolic intermediate biosynthesis; 5-phospho-alpha-D-ribose 1-diphosphate biosynthesis; 5-phospho-alpha-D-ribose 1-diphosphate from D-ribose 5-phosphate (route I): step 1/1. Involved in the biosynthesis of the central metabolite phospho-alpha-D-ribosyl-1-pyrophosphate (PRPP) via the transfer of pyrophosphoryl group from ATP to 1-hydroxyl of ribose-5-phosphate (Rib-5-P). This Streptococcus pyogenes serotype M3 (strain SSI-1) protein is Putative ribose-phosphate pyrophosphokinase 2.